A 524-amino-acid chain; its full sequence is Probable plastidic glucose transporter 1 (524 aa).

12 consecutive transmembrane segments (helical) span residues 88–108, 122–142, 151–171, 179–199, 208–228, 239–259, 320–340, 357–377, 386–406, 420–440, 452–472, and 483–503; these read MANF…VSIA, LVVS…GPLV, FQIF…AHSL, FLVG…ISEV, LGTL…LLGI, TMLY…QFAV, VAFI…NGVL, QASL…SYLI, LIGS…AVGF, GTLM…GLII, IMGF…LFFL, and VYAS…LFTV.

It belongs to the major facilitator superfamily. Sugar transporter (TC 2.A.1.1) family.

It is found in the plastid. Its subcellular location is the chloroplast membrane. Functionally, may be involved in the efflux of glucose towards the cytosol. The polypeptide is Probable plastidic glucose transporter 1 (Arabidopsis thaliana (Mouse-ear cress)).